Consider the following 507-residue polypeptide: ATP synthase subunit alpha, chloroplastic (507 aa).

170 to 177 serves as a coordination point for ATP; sequence GDRQTGKT.

This sequence belongs to the ATPase alpha/beta chains family. As to quaternary structure, F-type ATPases have 2 components, CF(1) - the catalytic core - and CF(0) - the membrane proton channel. CF(1) has five subunits: alpha(3), beta(3), gamma(1), delta(1), epsilon(1). CF(0) has four main subunits: a, b, b' and c.

It is found in the plastid. Its subcellular location is the chloroplast thylakoid membrane. The catalysed reaction is ATP + H2O + 4 H(+)(in) = ADP + phosphate + 5 H(+)(out). Functionally, produces ATP from ADP in the presence of a proton gradient across the membrane. The alpha chain is a regulatory subunit. The protein is ATP synthase subunit alpha, chloroplastic of Pelargonium hortorum (Common geranium).